A 440-amino-acid polypeptide reads, in one-letter code: Chromosome partition protein MukF (440 aa).

A leucine-zipper region spans residues 208–236 (LSETSGTLRELQDTLEAAGDKLQANLLRI).

The protein belongs to the MukF family. In terms of assembly, interacts, and probably forms a ternary complex, with MukE and MukB via its C-terminal region. The complex formation is stimulated by calcium or magnesium. It is required for an interaction between MukE and MukB.

The protein localises to the cytoplasm. It localises to the nucleoid. Involved in chromosome condensation, segregation and cell cycle progression. May participate in facilitating chromosome segregation by condensation DNA from both sides of a centrally located replisome during cell division. Not required for mini-F plasmid partitioning. Probably acts via its interaction with MukB and MukE. Overexpression results in anucleate cells. It has a calcium binding activity. This Escherichia coli O17:K52:H18 (strain UMN026 / ExPEC) protein is Chromosome partition protein MukF.